Here is a 183-residue protein sequence, read N- to C-terminus: Photosystem I assembly protein Ycf4 (183 aa).

2 helical membrane-spanning segments follow: residues 21-43 (YIWG…SSYL) and 63-85 (LVMC…LILW).

The protein belongs to the Ycf4 family.

The protein resides in the plastid. The protein localises to the chloroplast thylakoid membrane. Seems to be required for the assembly of the photosystem I complex. The polypeptide is Photosystem I assembly protein Ycf4 (Chlorella vulgaris (Green alga)).